We begin with the raw amino-acid sequence, 595 residues long: (E)-beta-ocimene synthase, chloroplastic (595 aa).

Residues 1–32 (MSTISINLMSIIRNPLHSKSKRALINKHPSSS) constitute a chloroplast transit peptide. Mn(2+) is bound by residues D350 and D354. The DDXXD motif motif lies at 350–354 (DDVYD). Homodimerization regions lie at residues 356-362 (YGTLDEL) and 428-465 (EEEW…LSIP). N493 and E501 together coordinate Mn(2+).

It belongs to the terpene synthase family. Homodimer. It depends on Mn(2+) as a cofactor. Mg(2+) is required as a cofactor. In terms of tissue distribution, expressed in peltate glandular trichomes. Present in flowers, leaves and stems.

Its subcellular location is the plastid. It localises to the chloroplast. It carries out the reaction (2E)-geranyl diphosphate = (E)-beta-ocimene + diphosphate. It functions in the pathway secondary metabolite biosynthesis; terpenoid biosynthesis. Its function is as follows. Involved in the biosynthesis of monoterpenes natural products. Monoterpene synthase that catalyzes mainly the formation of (E)-beta-ocimene and minor amounts of other monoterpenes (e.g. myrcene, (Z)-beta-ocimene, alpha- and gamma-terpinene) from geranyl diphosphate (GPP). The protein is (E)-beta-ocimene synthase, chloroplastic of Origanum vulgare (Wild marjoram).